The primary structure comprises 177 residues: MFPKTLTDSKYKAFVDGEIKEISLQDYIGKYVVLAFYPLDFTFVCPTEINRFSDLKGAFLRRNAVVLLISCDSVYTHKAWASIPREQNGVLGTAWPMVWDAKRELCNQFGLYDEENGHPMRSTVILAKDLSVRHISSNYHAIGRSVDEIIRLIDAITFNDENGDICPAEWRSENKDN.

The Thioredoxin domain maps to 1-158 (MFPKTLTDSK…IIRLIDAITF (158 aa)). The Cysteine sulfenic acid (-SOH) intermediate role is filled by Cys-45.

This sequence belongs to the peroxiredoxin family. AhpC/Prx1 subfamily. In terms of assembly, homodimer; disulfide-linked, upon oxidation.

It carries out the reaction a hydroperoxide + [thioredoxin]-dithiol = an alcohol + [thioredoxin]-disulfide + H2O. Its function is as follows. Thiol-specific peroxidase that catalyzes the reduction of hydrogen peroxide and organic hydroperoxides to water and alcohols, respectively. Plays a role in cell protection against oxidative stress by detoxifying peroxides and as sensor of hydrogen peroxide-mediated signaling events. The chain is Putative thioredoxin peroxidase from Encephalitozoon cuniculi (strain GB-M1) (Microsporidian parasite).